A 451-amino-acid chain; its full sequence is Eukaryotic translation initiation factor 3 subunit E (451 aa).

Residues 245–425 form the PCI domain; that stretch reads PFFNHEPARD…GTVVMNHPPS (181 aa).

This sequence belongs to the eIF-3 subunit E family. As to quaternary structure, component of the eukaryotic translation initiation factor 3 (eIF-3) complex.

The protein localises to the cytoplasm. Component of the eukaryotic translation initiation factor 3 (eIF-3) complex, which is involved in protein synthesis of a specialized repertoire of mRNAs and, together with other initiation factors, stimulates binding of mRNA and methionyl-tRNAi to the 40S ribosome. The eIF-3 complex specifically targets and initiates translation of a subset of mRNAs involved in cell proliferation. This Sclerotinia sclerotiorum (strain ATCC 18683 / 1980 / Ss-1) (White mold) protein is Eukaryotic translation initiation factor 3 subunit E (int6).